Reading from the N-terminus, the 187-residue chain is Cerebral dopamine neurotrophic factor (187 aa).

An N-terminal signal peptide occupies residues 1-24 (MRCISPTALVTFCAGFCISNPVLA). Intrachain disulfides connect Cys-37-Cys-124, Cys-40-Cys-113, and Cys-71-Cys-82.

It belongs to the ARMET family. Expressed at high levels in the heart, skeletal muscle, testis and brain (at protein level). In the brain, detected in the cerebral cortex neurons through layers II to VI. In the hippocampus, detected in the CA1 to CA3 pyramidal regions and in the granule and polymorph layers of dentate gyrus. Weak expression in the striatum. In substantia nigra, detected in solitary cells that did not express tyrosine hydroxylase, a marker for dopaminergic neurons. Relatively high expression in the Purkinje cells of the cerebellum and in regions of the brain stem, including the locus coeruleus.

The protein resides in the secreted. Its function is as follows. Trophic factor for dopamine neurons. Prevents the 6-hydroxydopamine (6-OHDA)-induced degeneration of dopaminergic neurons. When administered after 6-OHDA-lesioning, restores the dopaminergic function and prevents the degeneration of dopaminergic neurons in substantia nigra. This Mus musculus (Mouse) protein is Cerebral dopamine neurotrophic factor (Cdnf).